We begin with the raw amino-acid sequence, 415 residues long: Gamma-glutamyl phosphate reductase (415 aa).

It belongs to the gamma-glutamyl phosphate reductase family.

It is found in the cytoplasm. The enzyme catalyses L-glutamate 5-semialdehyde + phosphate + NADP(+) = L-glutamyl 5-phosphate + NADPH + H(+). It functions in the pathway amino-acid biosynthesis; L-proline biosynthesis; L-glutamate 5-semialdehyde from L-glutamate: step 2/2. In terms of biological role, catalyzes the NADPH-dependent reduction of L-glutamate 5-phosphate into L-glutamate 5-semialdehyde and phosphate. The product spontaneously undergoes cyclization to form 1-pyrroline-5-carboxylate. In Parabacteroides distasonis (strain ATCC 8503 / DSM 20701 / CIP 104284 / JCM 5825 / NCTC 11152), this protein is Gamma-glutamyl phosphate reductase.